Here is a 240-residue protein sequence, read N- to C-terminus: Ubiquinone biosynthesis O-methyltransferase (240 aa).

S-adenosyl-L-methionine contacts are provided by R44, G64, D85, and M129.

Belongs to the methyltransferase superfamily. UbiG/COQ3 family.

The enzyme catalyses a 3-demethylubiquinol + S-adenosyl-L-methionine = a ubiquinol + S-adenosyl-L-homocysteine + H(+). It catalyses the reaction a 3-(all-trans-polyprenyl)benzene-1,2-diol + S-adenosyl-L-methionine = a 2-methoxy-6-(all-trans-polyprenyl)phenol + S-adenosyl-L-homocysteine + H(+). Its pathway is cofactor biosynthesis; ubiquinone biosynthesis. In terms of biological role, O-methyltransferase that catalyzes the 2 O-methylation steps in the ubiquinone biosynthetic pathway. The protein is Ubiquinone biosynthesis O-methyltransferase of Escherichia coli O127:H6 (strain E2348/69 / EPEC).